Consider the following 93-residue polypeptide: Small ribosomal subunit protein uS19 (93 aa).

The disordered stretch occupies residues Glu-73 to Lys-93. The span at Tyr-80 to Lys-93 shows a compositional bias: basic residues.

It belongs to the universal ribosomal protein uS19 family.

Protein S19 forms a complex with S13 that binds strongly to the 16S ribosomal RNA. The protein is Small ribosomal subunit protein uS19 (rpsS) of Aster yellows phytoplasma.